Consider the following 94-residue polypeptide: Large ribosomal subunit protein bL25 (94 aa).

It belongs to the bacterial ribosomal protein bL25 family. In terms of assembly, part of the 50S ribosomal subunit; part of the 5S rRNA/L5/L18/L25 subcomplex. Contacts the 5S rRNA. Binds to the 5S rRNA independently of L5 and L18.

In terms of biological role, this is one of the proteins that binds to the 5S RNA in the ribosome where it forms part of the central protuberance. The protein is Large ribosomal subunit protein bL25 of Escherichia coli O157:H7.